The following is a 75-amino-acid chain: Metallothionein-like protein 1 (75 aa).

The protein belongs to the metallothionein superfamily. Type 15 family.

Functionally, metallothioneins have a high content of cysteine residues that bind various heavy metals. The chain is Metallothionein-like protein 1 (MTA) from Pisum sativum (Garden pea).